The sequence spans 78 residues: MTKFSLLDHESVPKHEIMPEGELKSVLSKYSIEKEQLPKIKVHDPVCKEIGAVVGDVVKITRISQTAGEAEYYRLVIE.

It belongs to the archaeal Rpo5/eukaryotic RPB5 RNA polymerase subunit family. In terms of assembly, part of the RNA polymerase complex.

Its subcellular location is the cytoplasm. The enzyme catalyses RNA(n) + a ribonucleoside 5'-triphosphate = RNA(n+1) + diphosphate. Functionally, DNA-dependent RNA polymerase (RNAP) catalyzes the transcription of DNA into RNA using the four ribonucleoside triphosphates as substrates. The protein is DNA-directed RNA polymerase subunit Rpo5 of Methanosarcina barkeri (strain Fusaro / DSM 804).